The sequence spans 523 residues: WD repeat-containing protein WDS homolog (523 aa).

The LisH domain maps to lysine 16 to tyrosine 48. One can recognise a CTLH domain in the interval lysine 49–leucine 107. WD repeat units follow at residues alanine 222 to leucine 261, serine 267 to threonine 306, asparagine 310 to arginine 353, threonine 355 to isoleucine 394, serine 395 to leucine 434, glycine 438 to valine 480, and glycine 483 to asparagine 523.

As to quaternary structure, interacts with RANBPM.

Its subcellular location is the cytoplasm. In Arabidopsis thaliana (Mouse-ear cress), this protein is WD repeat-containing protein WDS homolog.